A 76-amino-acid chain; its full sequence is UPF0291 protein BA_1897/GBAA_1897/BAS1759 (76 aa).

This sequence belongs to the UPF0291 family.

The protein resides in the cytoplasm. This Bacillus anthracis protein is UPF0291 protein BA_1897/GBAA_1897/BAS1759.